The chain runs to 88 residues: Long neurotoxin 20 (88 aa).

An N-terminal signal peptide occupies residues 1–21 (MKTLLLTLVVVTIVCLDLGNS). Cystine bridges form between cysteine 24–cysteine 42, cysteine 35–cysteine 63, cysteine 48–cysteine 52, cysteine 67–cysteine 78, and cysteine 79–cysteine 84.

The protein belongs to the three-finger toxin family. Long-chain subfamily. Type II alpha-neurotoxin sub-subfamily. As to expression, expressed by the venom gland.

The protein resides in the secreted. Binds with high affinity to muscular (alpha-1/CHRNA1) and neuronal (alpha-7/CHRNA7) nicotinic acetylcholine receptor (nAChR) and inhibits acetylcholine from binding to the receptor, thereby impairing neuromuscular and neuronal transmission. The polypeptide is Long neurotoxin 20 (Drysdalia coronoides (White-lipped snake)).